Consider the following 569-residue polypeptide: Proline--tRNA ligase (569 aa).

Belongs to the class-II aminoacyl-tRNA synthetase family. ProS type 1 subfamily. In terms of assembly, homodimer.

The protein resides in the cytoplasm. The enzyme catalyses tRNA(Pro) + L-proline + ATP = L-prolyl-tRNA(Pro) + AMP + diphosphate. In terms of biological role, catalyzes the attachment of proline to tRNA(Pro) in a two-step reaction: proline is first activated by ATP to form Pro-AMP and then transferred to the acceptor end of tRNA(Pro). As ProRS can inadvertently accommodate and process non-cognate amino acids such as alanine and cysteine, to avoid such errors it has two additional distinct editing activities against alanine. One activity is designated as 'pretransfer' editing and involves the tRNA(Pro)-independent hydrolysis of activated Ala-AMP. The other activity is designated 'posttransfer' editing and involves deacylation of mischarged Ala-tRNA(Pro). The misacylated Cys-tRNA(Pro) is not edited by ProRS. The sequence is that of Proline--tRNA ligase from Campylobacter jejuni subsp. doylei (strain ATCC BAA-1458 / RM4099 / 269.97).